A 181-amino-acid polypeptide reads, in one-letter code: 6,7-dimethyl-8-ribityllumazine synthase (181 aa).

5-amino-6-(D-ribitylamino)uracil is bound by residues tyrosine 30, 61-63 (ALE), and 87-89 (CII). Position 92-93 (92-93 (ET)) interacts with (2S)-2-hydroxy-3-oxobutyl phosphate. Histidine 95 (proton donor) is an active-site residue. Residue asparagine 120 participates in 5-amino-6-(D-ribitylamino)uracil binding. Arginine 134 provides a ligand contact to (2S)-2-hydroxy-3-oxobutyl phosphate.

This sequence belongs to the DMRL synthase family.

The catalysed reaction is (2S)-2-hydroxy-3-oxobutyl phosphate + 5-amino-6-(D-ribitylamino)uracil = 6,7-dimethyl-8-(1-D-ribityl)lumazine + phosphate + 2 H2O + H(+). It functions in the pathway cofactor biosynthesis; riboflavin biosynthesis; riboflavin from 2-hydroxy-3-oxobutyl phosphate and 5-amino-6-(D-ribitylamino)uracil: step 1/2. Its function is as follows. Catalyzes the formation of 6,7-dimethyl-8-ribityllumazine by condensation of 5-amino-6-(D-ribitylamino)uracil with 3,4-dihydroxy-2-butanone 4-phosphate. This is the penultimate step in the biosynthesis of riboflavin. The polypeptide is 6,7-dimethyl-8-ribityllumazine synthase (Beijerinckia indica subsp. indica (strain ATCC 9039 / DSM 1715 / NCIMB 8712)).